A 204-amino-acid polypeptide reads, in one-letter code: Small rubber particle protein (204 aa).

It belongs to the REF/SRPP family. In terms of assembly, auto-assembles in solution into stable nanomultimers of a globular nature. Post-translationally, not glycosylated. In terms of processing, the N-terminus is blocked. Consistent shifts of about 266 Da observed by MS in various forms of the intact protein suggest the addition of stearolyl groups. As to expression, highly expressed in the specialized vessel laticifers, but localized only in the laticifer layers in the conducting phloem. Also detected in leaves.

Its subcellular location is the cytoplasm. Functionally, involved in the biosynthesis of rubber, an isoprenoid polymer (cis-1,4-polyisoprene). The chain is Small rubber particle protein from Hevea brasiliensis (Para rubber tree).